The primary structure comprises 356 residues: A-type ATP synthase subunit C (356 aa).

Belongs to the V-ATPase V0D/AC39 subunit family. As to quaternary structure, has multiple subunits with at least A(3), B(3), C, D, E, F, H, I and proteolipid K(x).

It localises to the cell membrane. Functionally, component of the A-type ATP synthase that produces ATP from ADP in the presence of a proton gradient across the membrane. This Thermoplasma acidophilum (strain ATCC 25905 / DSM 1728 / JCM 9062 / NBRC 15155 / AMRC-C165) protein is A-type ATP synthase subunit C.